The sequence spans 53 residues: Reg12l (53 aa).

Positions 1–34 are excised as a propeptide; that stretch reads RVLFRSGDQPADQPAERMQDISPEQNPLFHPDKR. 3 disulfides stabilise this stretch: C36–C50, C37–C48, and C42–C51.

Belongs to the conotoxin M superfamily. In terms of tissue distribution, expressed by the venom duct.

The protein resides in the secreted. The sequence is that of Reg12l from Conus regius (Crown cone).